We begin with the raw amino-acid sequence, 188 residues long: Inner membrane-spanning protein YciB (188 aa).

5 helical membrane-spanning segments follow: residues 23–43 (FQKA…IGYA), 49–69 (AMLP…GLIF), 73–93 (VFVK…LVGG), 116–133 (WRTL…VAII), and 149–169 (FRLA…PFMM).

It belongs to the YciB family.

The protein resides in the cell inner membrane. Its function is as follows. Plays a role in cell envelope biogenesis, maintenance of cell envelope integrity and membrane homeostasis. The sequence is that of Inner membrane-spanning protein YciB from Caulobacter vibrioides (strain ATCC 19089 / CIP 103742 / CB 15) (Caulobacter crescentus).